The chain runs to 216 residues: Alanyl-tRNA editing protein AlaX-M (216 aa).

Residues His-99, His-103, and Cys-182 each coordinate Zn(2+).

This sequence belongs to the class-II aminoacyl-tRNA synthetase family. Editing domain AlaX-M subfamily. In terms of assembly, monomer. The cofactor is Zn(2+).

The protein resides in the cytoplasm. Functions in trans to edit the amino acid moiety from mischarged charged Gly-tRNA(Ala) and Ser-tRNA(Ala). The protein is Alanyl-tRNA editing protein AlaX-M (alaXM) of Pyrococcus horikoshii (strain ATCC 700860 / DSM 12428 / JCM 9974 / NBRC 100139 / OT-3).